We begin with the raw amino-acid sequence, 738 residues long: Polyphosphate kinase (738 aa).

The segment at 1–48 is disordered; it reads MIGNDRWVTEIETGPVTEARPDTNAREPGDRTPAAPPAATPAATTDQL. A compositionally biased stretch (basic and acidic residues) spans 19 to 30; sequence ARPDTNAREPGD. An ATP-binding site is contributed by asparagine 91. Mg(2+)-binding residues include arginine 427 and arginine 457. The active-site Phosphohistidine intermediate is histidine 487. ATP-binding residues include tyrosine 520, arginine 620, and histidine 648.

Belongs to the polyphosphate kinase 1 (PPK1) family. Mg(2+) is required as a cofactor. Post-translationally, an intermediate of this reaction is the autophosphorylated ppk in which a phosphate is covalently linked to a histidine residue through a N-P bond.

It catalyses the reaction [phosphate](n) + ATP = [phosphate](n+1) + ADP. Its function is as follows. Catalyzes the reversible transfer of the terminal phosphate of ATP to form a long-chain polyphosphate (polyP). This chain is Polyphosphate kinase, found in Mycobacterium ulcerans (strain Agy99).